Reading from the N-terminus, the 421-residue chain is UDP-N-acetylglucosamine 1-carboxyvinyltransferase 2 (421 aa).

Lysine 22–asparagine 23 contributes to the phosphoenolpyruvate binding site. Arginine 95 serves as a coordination point for UDP-N-acetyl-alpha-D-glucosamine. The Proton donor role is filled by cysteine 119. 2-(S-cysteinyl)pyruvic acid O-phosphothioketal is present on cysteine 119. Residues arginine 124–glutamine 128, aspartate 308, and valine 330 each bind UDP-N-acetyl-alpha-D-glucosamine.

It belongs to the EPSP synthase family. MurA subfamily.

Its subcellular location is the cytoplasm. It carries out the reaction phosphoenolpyruvate + UDP-N-acetyl-alpha-D-glucosamine = UDP-N-acetyl-3-O-(1-carboxyvinyl)-alpha-D-glucosamine + phosphate. The protein operates within cell wall biogenesis; peptidoglycan biosynthesis. Cell wall formation. Adds enolpyruvyl to UDP-N-acetylglucosamine. The protein is UDP-N-acetylglucosamine 1-carboxyvinyltransferase 2 of Staphylococcus saprophyticus subsp. saprophyticus (strain ATCC 15305 / DSM 20229 / NCIMB 8711 / NCTC 7292 / S-41).